The following is a 411-amino-acid chain: Diels-Alderase ffsF (411 aa).

The signal sequence occupies residues 1–17 (MTQIKLLLLSLAITAQS).

This sequence belongs to the Diels-Alderase family.

Its pathway is mycotoxin biosynthesis. In terms of biological role, diels-Alderase; part of the gene cluster that mediates the biosynthesis of the cytotoxic leucine-containing cytochalasans, including aspochalasin C, aspochalasin E, TMC-169, flavichalasine F, aspergillin PZ, aspochalasin M and flavichalasine G. The first step in the pathway is catalyzed by the hybrid PKS-NRPS ffsA that utilizes 8 units of malonyl-CoA to iteratively assemble the octaketide chain before addition of L-leucine by the C-terminal NRPS modules. Because ffsA lacks a designated enoylreductase (ER) domain, the required activity is provided the enoyl reductase fssC. The methyltransferase (MT) domain of ffsA catalyzes the alpha-methylation at C10 and C14 using S-adenosyl-L-methionine as the methyl-donating cosubstrate. Reduction by the hydrolyase ffsE, followed by dehydration and intra-molecular Diels-Alder cyclization by the Diels-Alderase ffsF then yield the required isoindolone-fused macrocycle. A number of oxidative steps catalyzed by the tailoring cytochrome P450 monooxygenase ffsD, the FAD-linked oxidoreductase ffsJ and the short-chain dehydrogenase/reductase ffsI, are further required to afford the final products. This chain is Diels-Alderase ffsF, found in Aspergillus flavipes.